Reading from the N-terminus, the 360-residue chain is Aminomethyltransferase (360 aa).

It belongs to the GcvT family. The glycine cleavage system is composed of four proteins: P, T, L and H.

It catalyses the reaction N(6)-[(R)-S(8)-aminomethyldihydrolipoyl]-L-lysyl-[protein] + (6S)-5,6,7,8-tetrahydrofolate = N(6)-[(R)-dihydrolipoyl]-L-lysyl-[protein] + (6R)-5,10-methylene-5,6,7,8-tetrahydrofolate + NH4(+). In terms of biological role, the glycine cleavage system catalyzes the degradation of glycine. The protein is Aminomethyltransferase of Pseudoalteromonas translucida (strain TAC 125).